The sequence spans 462 residues: Cysteine--tRNA ligase (462 aa).

C28 is a Zn(2+) binding site. A 'HIGH' region motif is present at residues 30-40 (VTAYDLCHIGH). Zn(2+) is bound by residues C209, H234, and E238. Residues 266-270 (KMSKS) carry the 'KMSKS' region motif. K269 lines the ATP pocket.

The protein belongs to the class-I aminoacyl-tRNA synthetase family. In terms of assembly, monomer. Zn(2+) serves as cofactor.

The protein resides in the cytoplasm. The catalysed reaction is tRNA(Cys) + L-cysteine + ATP = L-cysteinyl-tRNA(Cys) + AMP + diphosphate. The sequence is that of Cysteine--tRNA ligase from Baumannia cicadellinicola subsp. Homalodisca coagulata.